A 356-amino-acid chain; its full sequence is Alanine racemase, catabolic (356 aa).

Lys35 (proton acceptor; specific for D-alanine) is an active-site residue. Lys35 is subject to N6-(pyridoxal phosphate)lysine. Residue Arg130 coordinates substrate. Residue Tyr253 is the Proton acceptor; specific for L-alanine of the active site. A substrate-binding site is contributed by Met301.

It belongs to the alanine racemase family. Monomer. Pyridoxal 5'-phosphate serves as cofactor.

It carries out the reaction L-alanine = D-alanine. With respect to regulation, inactivated by D- and L-beta-fluoroalanine, D- and L-beta-chloroalanine, and O-acetyl-D-serine. Its function is as follows. Isomerizes L-alanine to D-alanine which is then oxidized to pyruvate by DadA. The polypeptide is Alanine racemase, catabolic (dadX) (Salmonella typhimurium (strain LT2 / SGSC1412 / ATCC 700720)).